The chain runs to 2310 residues: Retinal-specific phospholipid-transporting ATPase ABCA4 (2310 aa).

The Cytoplasmic segment spans residues 1 to 21 (MGFLRQIQLLLWKNWTLRKRQ). A helical transmembrane segment spans residues 22-42 (KIRFVVELVWPLSLFLVLIWL). Over 43–646 (RNANPLYSQH…MPYPCFVDDS (604 aa)) the chain is Extracellular. Disulfide bonds link Cys-54–Cys-81 and Cys-75–Cys-324. Asn-98 carries an N-linked (GlcNAc...) asparagine glycan. The Mg(2+) site is built by Ser-336 and Asn-338. Cysteines 370 and 519 form a disulfide. N-linked (GlcNAc...) asparagine glycosylation is found at Asn-415 and Asn-504. Positions 587 and 653 each coordinate an N-all-trans-retinylidenephosphatidylethanolamine. Disulfide bonds link Cys-641–Cys-1489, Cys-1443–Cys-1454, and Cys-1487–Cys-1501. The chain crosses the membrane as a helical span at residues 647-667 (FMIILNRCFPIFMVLAWIYSV). The Cytoplasmic portion of the chain corresponds to 668-699 (SMTVKGIVLEKELRLKETLKNQGVSNAVIWCT). A helical transmembrane segment spans residues 700–720 (WFLDSFSIMALSIFLLTLFIM). The Extracellular segment spans residues 721 to 730 (HGRILHYSDP). A helical membrane pass occupies residues 731–751 (FILFLFLLAFATATIMQSFLL). Residues 752–759 (STLFSKAS) are Cytoplasmic-facing. The helical transmembrane segment at 760–780 (LAAACSGVIYFTLYLPHVLCF) threads the bilayer. The Extracellular portion of the chain corresponds to 781-835 (AWQDRMTADLKTTVSLLSSVAFGFGTEYLVRFEEQGLGLQWSNIGKSPLEGDEFS). A helical membrane pass occupies residues 836-856 (FLLSMKMMLLDAALYGLLAWY). At 857–1375 (LDQVFPGDYG…IRSRKDFVAQ (519 aa)) the chain is on the cytoplasmic side. Positions 891-910 (ERALEKTEPLTEEMEDPEHP) are disordered. Phosphothreonine is present on Thr-901. Positions 929-1160 (VCVKNLVKVF…FGTGFYLTLV (232 aa)) constitute an ABC transporter 1 domain. 3 residues coordinate ATP: Phe-938, Gly-966, and Lys-969. Residue Thr-970 coordinates Mg(2+). ATP contacts are provided by Thr-971, Gln-1010, Lys-1054, Gly-1064, Gly-1065, and His-1118. Residue Ser-1185 is modified to Phosphoserine. The segment at 1311–1344 (RQYAQAPHTCSPGQVDPPKGQPSPEPEDPGVPFN) is disordered. The helical transmembrane segment at 1376–1396 (IVLPATFVFLALMLSIIVPPF) threads the bilayer. Over 1397–1726 (GEFPALTLHP…VSPTTYWLTN (330 aa)) the chain is Extracellular. N-linked (GlcNAc...) asparagine glycosylation occurs at Asn-1468. Residues Asn-1528, Asn-1587, and Asn-1661 are each glycosylated (N-linked (GlcNAc...) asparagine). Residues 1727-1747 (FLWDIMNYAVSAGLVVGIFIG) form a helical membrane-spanning segment. The Cytoplasmic portion of the chain corresponds to 1748–1758 (FQKKAYTSPDN). The chain crosses the membrane as a helical span at residues 1759 to 1779 (LPALVSLLMLYGWAVIPMMYP). The Extracellular segment spans residues 1780 to 1791 (ASFLFEVPSTAY). The chain crosses the membrane as a helical span at residues 1792-1812 (VALSCANLFIGINSSAITFVL). The Cytoplasmic segment spans residues 1813 to 1830 (ELFENNRTLLRFNAMLRK). Residues 1831–1851 (LLIVFPHFCLGRGLIDLALSQ) traverse the membrane as a helical segment. Residues 1852 to 1872 (AVTDVYAQFGEEYSANPFQWD) lie on the Extracellular side of the membrane. The chain crosses the membrane as a helical span at residues 1873-1893 (LIGKNLVAMAIEGVVYFLLTL). Over 1894 to 2310 (LIQHHFFLTR…AEDKHTRSPQ (417 aa)) the chain is Cytoplasmic. The 233-residue stretch at 1937-2169 (LKLNELTKVY…FGDGYIVTMK (233 aa)) folds into the ABC transporter 2 domain. Positions 1973, 1974, 1977, 1978, 1979, and 2072 each coordinate ATP. Thr-1978 serves as a coordination point for Mg(2+). An essential for ATP binding and ATPase activity region spans residues 2243-2248 (VFVNFA). The segment at 2266–2310 (ASWQAKLEEKSGRLQTQEPLPAGSEQLANGSNPTAAEDKHTRSPQ) is disordered. Over residues 2301-2310 (AEDKHTRSPQ) the composition is skewed to basic and acidic residues.

Belongs to the ABC transporter superfamily. ABCA family. Post-translationally, N-glycosylated. Proteolytic cleavage by trypsin leads to a 120-kDa N-terminal fragment and a 115-kDa C-terminal fragment that are linked through disulfide bonds. In terms of processing, phosphorylation is independent of light exposure and modulates ATPase activity. In terms of tissue distribution, retinal-specific. Seems to be exclusively found in the rims of rod photoreceptor cells.

Its subcellular location is the membrane. It localises to the endoplasmic reticulum. The protein localises to the cell projection. The protein resides in the cilium. It is found in the photoreceptor outer segment. The enzyme catalyses an N-all-trans-retinylidenephosphatidylethanolamine(out) + ATP + H2O = an N-all-trans-retinylidenephosphatidylethanolamine(in) + ADP + phosphate + H(+). It carries out the reaction ATP + H2O + phospholipidSide 1 = ADP + phosphate + phospholipidSide 2.. The catalysed reaction is a 1,2-diacyl-sn-glycero-3-phosphoethanolamine(out) + ATP + H2O = a 1,2-diacyl-sn-glycero-3-phosphoethanolamine(in) + ADP + phosphate + H(+). It catalyses the reaction N-11-cis-retinylidenephosphatidylethanolamine(out) + ATP + H2O = N-11-cis-retinylidenephosphatidylethanolamine(in) + ADP + phosphate + H(+). The enzyme catalyses ATP + H2O = ADP + phosphate + H(+). ATPase activity is decreased by cholesterol and ceramide. Phospholipids translocase activity is highly reduced by berylium fluoride and aluminum floride. N-ethylmaleimide inhibits phospholipid translocase activity. Flippase that catalyzes in an ATP-dependent manner the transport of retinal-phosphatidylethanolamine conjugates like the 11-cis and all-trans isomers of N-retinylidene-phosphatidylethanolamine from the lumen to the cytoplasmic leaflet of photoreceptor outer segment disk membranes, where N-cis-retinylidene-phosphatidylethanolamine (N-cis-R-PE) is then isomerized to its all-trans isomer (N-trans-R-PE) and reduced by RDH8 to produce all-trans-retinol (all-trans-rol) and therefore prevents the accumulation of excess of 11-cis-retinal and its schiff-base conjugate and the formation of toxic bisretinoid. Displays ATPase activity in vitro in absence of retinal substrate. May display GTPase activity that is strongly influenced by the lipid environment and the presence of retinoid compounds. Binds the unprotonated form of N-retinylidene-phosphatidylethanolamine with high affinity in the absence of ATP and ATP binding and hydrolysis induce a protein conformational change that causes the dissociation of N-retinylidene-phosphatidylethanolamine. This chain is Retinal-specific phospholipid-transporting ATPase ABCA4, found in Mus musculus (Mouse).